The primary structure comprises 281 residues: Elongation factor Ts (281 aa).

The involved in Mg(2+) ion dislocation from EF-Tu stretch occupies residues 80 to 83 (TDFV).

This sequence belongs to the EF-Ts family.

Its subcellular location is the cytoplasm. In terms of biological role, associates with the EF-Tu.GDP complex and induces the exchange of GDP to GTP. It remains bound to the aminoacyl-tRNA.EF-Tu.GTP complex up to the GTP hydrolysis stage on the ribosome. This is Elongation factor Ts from Vibrio atlanticus (strain LGP32) (Vibrio splendidus (strain Mel32)).